The sequence spans 104 residues: Large ribosomal subunit protein bL21c (104 aa).

It belongs to the bacterial ribosomal protein bL21 family. As to quaternary structure, part of the 50S ribosomal subunit.

The protein resides in the plastid. It is found in the cyanelle. Its function is as follows. This protein binds to 23S rRNA. The chain is Large ribosomal subunit protein bL21c from Cyanophora paradoxa.